The primary structure comprises 180 residues: Endoribonuclease YbeY (180 aa).

Residues histidine 149, histidine 153, and histidine 159 each contribute to the Zn(2+) site.

The protein belongs to the endoribonuclease YbeY family. Zn(2+) is required as a cofactor.

It is found in the cytoplasm. Its function is as follows. Single strand-specific metallo-endoribonuclease involved in late-stage 70S ribosome quality control and in maturation of the 3' terminus of the 16S rRNA. The polypeptide is Endoribonuclease YbeY (Prochlorococcus marinus subsp. pastoris (strain CCMP1986 / NIES-2087 / MED4)).